A 140-amino-acid chain; its full sequence is Translation initiation factor 2 subunit beta (140 aa).

The protein belongs to the eIF-2-beta/eIF-5 family. As to quaternary structure, heterotrimer composed of an alpha, a beta and a gamma chain.

Functionally, eIF-2 functions in the early steps of protein synthesis by forming a ternary complex with GTP and initiator tRNA. This Metallosphaera sedula (strain ATCC 51363 / DSM 5348 / JCM 9185 / NBRC 15509 / TH2) protein is Translation initiation factor 2 subunit beta.